The chain runs to 957 residues: MNNKKTVTNRKGMIPNRLNKFSIRKYSVGTASILVGTTLIFGLSGHEAKAAEHTNGELNQSKNETTAPSENKTTEKVDSRQLKDNTQTATADQPKVTMSDSATVKETSSNMQSPQNATASQSTTQTSNVTTNDKSSTTYSNETDKSNLTQAKDVSATPKTTTIKPRTLNRMAVNTVAAPQQGTNVNDKVHFSNIDIAIDKGHLNKDTGKTEFWATSSDVLKLKANYTIDDSVKEGDTFTFKYGQYFRPGSVRLPSQTQNLYNAQGNIIAKGIYDSTTNTTTYTFTNYVDQYTNVSGSFEQVAFAKRENATTDKTAYKMEVSLGNDTYSEEIIVDYGNKKAQPLISSTNYINNEDLSRNMTAYVNQPKNTYTKQTFVTNLTGYKFNPNAKNFKIYEVTDQNQFVDSFTPDTSKLKDVTNQFNITYSNDNKTATVDLMNGQTSSNKQYIIQQVAYPDNTSTDNGKIDYTLDTDKTKYSWSNSYSNVNGSSTANGDQKKYNLGDYVWEDTNKDGKQDANEKGIKGVYVILKDSNGKELDRTTTDENGKYQFTGLSNGTYSVEFSTPAGYTPTTANAGTDDAVDSDGLTTTGVIKDADNMTLDSGFYKTPKYSLGDYVWYDSNKDGKQDSTEKGIKGVKVTLQNEKGEVIGTTETDENGKYRFDNLDSGKYKVIFEKPAGLTQTGTNTTEDDKDADGGEVDVTITDHDDFTLDNGYYEEETSDSDSDSDSDSDSDSDSDSDSDSDSDSDSDSDSDSDSDSDSDSDSDSDSDSDSDSDSDSDSDSDSDSDSDSDSDSDSDSDSDSDSDSDSDSDSDSDSDSDSDSDSDSDSDSDSDSDTDSDSDSDSDSDSDSDSDSDSDSDSDSDSDSDSDSDSDSDSDSDSDSDSDSESDADSDTDSDSDAGKHTPAKPMSTVKDQHKTAKALPETGSENNNSNNGTLFGGLFAALGSLLLFGRRKKQNK.

The signal sequence occupies residues 1–50; it reads MNNKKTVTNRKGMIPNRLNKFSIRKYSVGTASILVGTTLIFGLSGHEAKA. A disordered region spans residues 51-166; that stretch reads AEHTNGELNQ…TPKTTTIKPR (116 aa). Positions 51 to 495 are ligand binding A region; it reads AEHTNGELNQ…GSSTANGDQK (445 aa). A compositionally biased stretch (polar residues) spans 56-71; the sequence is GELNQSKNETTAPSEN. Residues 72-83 are compositionally biased toward basic and acidic residues; sequence KTTEKVDSRQLK. Residues 84-114 show a composition bias toward polar residues; that stretch reads DNTQTATADQPKVTMSDSATVKETSSNMQSP. Over residues 115-132 the composition is skewed to low complexity; sequence QNATASQSTTQTSNVTTN. Positions 133 to 164 are enriched in polar residues; sequence DKSSTTYSNETDKSNLTQAKDVSATPKTTTIK. CNA-B domains lie at 496–606 and 607–717; these read KYNL…YKTP and KYSL…EEET. Residues 678 to 937 are disordered; it reads TQTGTNTTED…NNSNNGTLFG (260 aa). 2 stretches are compositionally biased toward acidic residues: residues 685–695 and 712–896; these read TEDDKDADGGE and YYEE…DSDS. An LPXTG sorting signal motif is present at residues 920 to 924; the sequence is LPETG. The span at 922-937 shows a compositional bias: low complexity; sequence ETGSENNNSNNGTLFG. Pentaglycyl murein peptidoglycan amidated threonine is present on Thr-923. The propeptide at 924 to 957 is removed by sortase; that stretch reads GSENNNSNNGTLFGGLFAALGSLLLFGRRKKQNK.

The protein belongs to the serine-aspartate repeat-containing protein (SDr) family. Homodimerizes; via N2-Domain. Interacts with host NRXN1; this interaction mediates bacterial attachment to host cells.

It localises to the secreted. Its subcellular location is the cell wall. Cell surface-associated calcium-binding protein which plays an important role in adhesion and pathogenesis. Mediates interactions with components of the extracellular matrix such as host NRXN1 to promote bacterial adhesion. The polypeptide is Serine-aspartate repeat-containing protein C (sdrC) (Staphylococcus aureus (strain MSSA476)).